Reading from the N-terminus, the 667-residue chain is Fatty acyl-CoA synthetase A (667 aa).

This sequence belongs to the ATP-dependent AMP-binding enzyme family.

It is found in the endosome membrane. It carries out the reaction a long-chain fatty acid + ATP + CoA = a long-chain fatty acyl-CoA + AMP + diphosphate. Its function is as follows. Long chain fatty acid acyl-CoA synthetases catalyze the formation of a thiester bond between a free fatty acid and coenzyme A during fatty acid metabolic process. May mediate fatty acid retrieval from the lumen of endosomes into the cytoplasm. The protein is Fatty acyl-CoA synthetase A (fcsA) of Dictyostelium discoideum (Social amoeba).